The primary structure comprises 177 residues: ATP-dependent protease subunit HslV (177 aa).

Residue T6 is part of the active site. G161, C164, and T167 together coordinate Na(+).

The protein belongs to the peptidase T1B family. HslV subfamily. As to quaternary structure, a double ring-shaped homohexamer of HslV is capped on each side by a ring-shaped HslU homohexamer. The assembly of the HslU/HslV complex is dependent on binding of ATP.

Its subcellular location is the cytoplasm. It carries out the reaction ATP-dependent cleavage of peptide bonds with broad specificity.. Allosterically activated by HslU binding. In terms of biological role, protease subunit of a proteasome-like degradation complex believed to be a general protein degrading machinery. In Petrotoga mobilis (strain DSM 10674 / SJ95), this protein is ATP-dependent protease subunit HslV.